The chain runs to 674 residues: Oxidative stress response two-component system protein SSK1 (674 aa).

The span at 66–75 shows a compositional bias: polar residues; that stretch reads SPTTLTTPQN. Disordered stretches follow at residues 66–115, 259–354, and 372–497; these read SPTT…GTTK, QSSI…SVAT, and ANNN…NDPT. The span at 90–99 shows a compositional bias: basic and acidic residues; it reads ETTRKNRPDD. Positions 101-115 are enriched in polar residues; sequence NSITPSNSINSGTTK. A compositionally biased stretch (low complexity) spans 264-276; it reads NNNNNNSNVNNNN. 2 stretches are compositionally biased toward polar residues: residues 302–314 and 323–336; these read MNRS…NNPV and VSPS…NSPV. Low complexity-rich tracts occupy residues 343–352 and 372–383; these read SNPVSSPNSV and ANNNSNQASQSS. The segment covering 391–416 has biased composition (basic and acidic residues); sequence VLSEDGSKSVNDKTEEVVSSKLKPND. Over residues 422-433 the composition is skewed to low complexity; the sequence is QAKQQEQQTAEQ. Residues 434-444 are compositionally biased toward polar residues; it reads SENGFSETSAS. Positions 459–481 are enriched in low complexity; that stretch reads TKSSTTATTTSSNSISNNNNTSS. The region spanning 507 to 653 is the Response regulatory domain; that stretch reads SVLVVEDNAI…WLQNKITEWG (147 aa). Asp-556 carries the post-translational modification 4-aspartylphosphate.

This sequence belongs to the SSK1 family.

Final receptor of the SLN1-YPD1-SSK1 two-component regulatory system, which controls activity of the HOG1 pathway in response to oxidative stress and probably also to the osmolarity of the extracellular environment. Involved in cell wall biosynthesis, hyphal growth, and virulence. Regulates the expression of CHK1, as well as of a subset of genes whose functions are associated with cell wall biosynthesis and adaptation to oxidative stress. Provides at least partial adaptive functions for the survival following encounter with human neutrophils. This is Oxidative stress response two-component system protein SSK1 (SSK1) from Candida albicans (strain SC5314 / ATCC MYA-2876) (Yeast).